A 211-amino-acid polypeptide reads, in one-letter code: Transcriptional regulator GfcR (211 aa).

Belongs to the purine/pyrimidine phosphoribosyltransferase family. GfcR subfamily.

In Methanocaldococcus jannaschii (strain ATCC 43067 / DSM 2661 / JAL-1 / JCM 10045 / NBRC 100440) (Methanococcus jannaschii), this protein is Transcriptional regulator GfcR.